The primary structure comprises 396 residues: Gamma-D-glutamyl-L-diamino acid endopeptidase 1 (396 aa).

2 consecutive LysM domains span residues 1–45 and 51–95; these read MDIL…RIQI and TSYT…TIQV. Positions 108 to 394 constitute a Peptidase M14 domain; that stretch reads QNYDYSMMMN…EALGIFLAGL (287 aa). Zn(2+) is bound by residues His162 and Glu165. Asp255 provides a ligand contact to substrate. His307 contacts Zn(2+). Tyr347 serves as the catalytic Proton donor. Glu366 (proton donor/acceptor) is an active-site residue.

This sequence belongs to the peptidase M14 family. Zn(2+) serves as cofactor.

It catalyses the reaction Hydrolysis of gamma-D-glutamyl bonds to the L-terminus (position 7) of meso-diaminopimelic acid (meso-A2pm) in 7-(L-Ala-gamma-D-Glu)-meso-A2pm and 7-(L-Ala-gamma-D-Glu)-7-(D-Ala)-meso-A2pm. It is required that the D-terminal amino and carboxy groups of meso-A2pm are unsubstituted.. In terms of biological role, an endopeptidase which hydrolyzes the gamma-D-Glu-(L)meso-diaminopimelic acid bond of L-Ala-gamma-D-Glu-(L)meso-diaminopimelic acid and L-Ala-gamma-D-Glu-(L)meso-diaminopimelic acid(L)-D-Ala peptides. It is active on spore cortex peptidoglycan. The protein is Gamma-D-glutamyl-L-diamino acid endopeptidase 1 of Lysinibacillus sphaericus (Bacillus sphaericus).